A 266-amino-acid chain; its full sequence is Thymidylate synthase (266 aa).

Arginine 24 is a dUMP binding site. Histidine 54 serves as a coordination point for (6R)-5,10-methylene-5,6,7,8-tetrahydrofolate. 129–130 (RR) serves as a coordination point for dUMP. The active-site Nucleophile is the cysteine 149. Residues 169–172 (RSAD), asparagine 180, and 210–212 (HIY) contribute to the dUMP site. Residue aspartate 172 participates in (6R)-5,10-methylene-5,6,7,8-tetrahydrofolate binding. Residue alanine 265 participates in (6R)-5,10-methylene-5,6,7,8-tetrahydrofolate binding.

It belongs to the thymidylate synthase family. Bacterial-type ThyA subfamily. Homodimer.

Its subcellular location is the cytoplasm. The enzyme catalyses dUMP + (6R)-5,10-methylene-5,6,7,8-tetrahydrofolate = 7,8-dihydrofolate + dTMP. It participates in pyrimidine metabolism; dTTP biosynthesis. Functionally, catalyzes the reductive methylation of 2'-deoxyuridine-5'-monophosphate (dUMP) to 2'-deoxythymidine-5'-monophosphate (dTMP) while utilizing 5,10-methylenetetrahydrofolate (mTHF) as the methyl donor and reductant in the reaction, yielding dihydrofolate (DHF) as a by-product. This enzymatic reaction provides an intracellular de novo source of dTMP, an essential precursor for DNA biosynthesis. The protein is Thymidylate synthase of Corynebacterium glutamicum (strain R).